The sequence spans 276 residues: 4-chlorobenzoyl coenzyme A dehalogenase-2 (276 aa).

66 to 71 is a substrate binding site; the sequence is AGFDLE. The Proton acceptor role is filled by His-93. Gly-117 contributes to the substrate binding site. Asp-148 acts as the Nucleophile in catalysis. Arg-261 provides a ligand contact to substrate.

Belongs to the enoyl-CoA hydratase/isomerase family. Homotetramer.

It carries out the reaction 4-chlorobenzoyl-CoA + H2O = 4-hydroxybenzoyl-CoA + chloride + H(+). Its pathway is xenobiotic degradation; 4-chlorobenzoate degradation; 4-hydroxybenzoate from 4-chlorobenzoate: step 2/3. Its function is as follows. Dehalogenates 4-chlorobenzoyl-CoA, 4-iodobenzoyl-CoA, 4-bromobenzoyl-CoA and, at a slower rate, 4-fluorobenzoyl-CoA. Does not dehalogenate 2-chlorobenzoyl-CoA or 3-chlorobenzoyl-CoA. This chain is 4-chlorobenzoyl coenzyme A dehalogenase-2, found in Arthrobacter sp.